Consider the following 276-residue polypeptide: UPF0328 protein ECU04_0100 (276 aa).

Positions 1–24 (MGIIDVQRSHLTATPSKERDAPAH) are disordered.

This sequence belongs to the UPF0328 family.

The chain is UPF0328 protein ECU04_0100 from Encephalitozoon cuniculi (strain GB-M1) (Microsporidian parasite).